Here is a 164-residue protein sequence, read N- to C-terminus: ATP synthase subunit b 2 (164 aa).

Residues 4–24 (TFWAFVGLVLFLALLVYFQIP) traverse the membrane as a helical segment.

The protein belongs to the ATPase B chain family. F-type ATPases have 2 components, F(1) - the catalytic core - and F(0) - the membrane proton channel. F(1) has five subunits: alpha(3), beta(3), gamma(1), delta(1), epsilon(1). F(0) has three main subunits: a(1), b(2) and c(10-14). The alpha and beta chains form an alternating ring which encloses part of the gamma chain. F(1) is attached to F(0) by a central stalk formed by the gamma and epsilon chains, while a peripheral stalk is formed by the delta and b chains.

It localises to the cell inner membrane. Its function is as follows. F(1)F(0) ATP synthase produces ATP from ADP in the presence of a proton or sodium gradient. F-type ATPases consist of two structural domains, F(1) containing the extramembraneous catalytic core and F(0) containing the membrane proton channel, linked together by a central stalk and a peripheral stalk. During catalysis, ATP synthesis in the catalytic domain of F(1) is coupled via a rotary mechanism of the central stalk subunits to proton translocation. Component of the F(0) channel, it forms part of the peripheral stalk, linking F(1) to F(0). The polypeptide is ATP synthase subunit b 2 (Bartonella tribocorum (strain CIP 105476 / IBS 506)).